Consider the following 518-residue polypeptide: Putative BTB/POZ domain and WD-repeat protein R731 (518 aa).

The 71-residue stretch at 22–92 folds into the BTB domain; sequence TDCQLHLTDS…FYGFPLEEPN (71 aa). Residues 224–246 are disordered; it reads NHEESSDDEVNDDEDTDNEDTDD. Residues 228-246 show a composition bias toward acidic residues; sequence SSDDEVNDDEDTDNEDTDD. WD repeat units follow at residues 391-430 and 437-475; these read NHSTTINHILYSPKSKYFIFCDENSIIYVYSTKDNYSLIK and FLKFGVKDFEFMTSKIIVAIDIKGKICIWNIETEQIIQN.

The protein belongs to the mimivirus BTB/WD family.

In Acanthamoeba polyphaga (Amoeba), this protein is Putative BTB/POZ domain and WD-repeat protein R731.